A 233-amino-acid polypeptide reads, in one-letter code: Large ribosomal subunit protein uL1 (233 aa).

This sequence belongs to the universal ribosomal protein uL1 family. In terms of assembly, part of the 50S ribosomal subunit.

Binds directly to 23S rRNA. The L1 stalk is quite mobile in the ribosome, and is involved in E site tRNA release. In terms of biological role, protein L1 is also a translational repressor protein, it controls the translation of the L11 operon by binding to its mRNA. This chain is Large ribosomal subunit protein uL1, found in Geotalea uraniireducens (strain Rf4) (Geobacter uraniireducens).